Reading from the N-terminus, the 310-residue chain is MTTSILDTYPQICSPNALPGTPGNLTKEQEEALLQFRSILLEKNYKERLDDSTLLRFLRARKFDINASVEMFVETERWREEYGANTIIEDYENNKEAEDKERIKLAKMYPQYYHHVDKDGRPLYFEELGGINLKKMYKITTEKQMLRNLVKEYELFATYRVPACSRRAGYLIETSCTVLDLKGISLSNAYHVLSYIKDVADISQNYYPERMGKFYIIHSPFGFSTMFKMVKPFLDPVTVSKIFILGSSYKKELLKQIPIENLPVKYGGTSVLHNPNDKFYYSDIGPWRDPRYIGPEGEIPNIFGKFTVTS.

The CRAL-TRIO domain maps to 101–274; the sequence is ERIKLAKMYP…KYGGTSVLHN (174 aa).

The chain is CRAL-TRIO domain-containing protein YKL091C from Saccharomyces cerevisiae (strain ATCC 204508 / S288c) (Baker's yeast).